The primary structure comprises 361 residues: uncharacterized protein (361 aa).

Residue 41 to 48 (GPLNSGKT) coordinates ATP.

This sequence belongs to the archaeal ATPase family.

This is an uncharacterized protein from Methanocaldococcus jannaschii (strain ATCC 43067 / DSM 2661 / JAL-1 / JCM 10045 / NBRC 100440) (Methanococcus jannaschii).